We begin with the raw amino-acid sequence, 359 residues long: NAC transcription factor 47 (359 aa).

The NAC domain occupies 10–186 (LPPGFRFHPT…DWVLCRIYKK (177 aa)). Residues 112-192 (IGIKKALVFY…IYKKSHASLS (81 aa)) mediate DNA binding. Disordered stretches follow at residues 147–166 (KRINSSRSGGSEVNNNFGDR) and 200–226 (TSNQEHEENDNEPFVDRGTFLPNLQND). The segment covering 148–165 (RINSSRSGGSEVNNNFGD) has biased composition (polar residues).

It localises to the nucleus. In terms of biological role, transcription factor that binds to the promoter of ACO5, an ACC oxidase involved in ethylene biosynthesis. Mediates waterlogging-induced hyponastic leaf movement, and cell expansion in abaxial cells of the basal petiole region, by directly regulating the expression of ACO5. Required for normal seed development and morphology. In Arabidopsis thaliana (Mouse-ear cress), this protein is NAC transcription factor 47.